A 469-amino-acid chain; its full sequence is Zinc finger and BTB domain-containing protein 8A.1-B (469 aa).

Residues 24 to 92 (CDCHIIVEGQ…VYSGKLPLSG (69 aa)) enclose the BTB domain. 2 consecutive C2H2-type zinc fingers follow at residues 315–337 (FKCP…LRCH) and 343–366 (YPCE…QTIH).

It is found in the nucleus. May be involved in transcriptional regulation. The chain is Zinc finger and BTB domain-containing protein 8A.1-B (zbtb8a.1-b) from Xenopus laevis (African clawed frog).